Consider the following 345-residue polypeptide: Transcriptional activator hacA (345 aa).

The disordered stretch occupies residues 1–106 (MSCDMEKTMS…AQTSRERKRL (106 aa)). Positions 30–40 (PADTSLNSADV) are enriched in polar residues. Basic and acidic residues-rich tracts occupy residues 41 to 51 (KTQEVKPEEKK) and 77 to 91 (KTED…ERVL). The bZIP domain maps to 83–146 (EQRRIERVLR…NRLSQQLAQL (64 aa)). Residues 85-138 (RRIERVLRNRAAAQTSRERKRLEMEKLENEKIQMEQQNQFLLQRLSQMEAENNR) form a basic motif region. The interval 139-146 (LSQQLAQL) is leucine-zipper. The tract at residues 186-210 (RIPFPTPSLSDYSPTLKPSTLAESS) is disordered. Over residues 192–210 (PSLSDYSPTLKPSTLAESS) the composition is skewed to polar residues.

It belongs to the bZIP family. As to quaternary structure, homodimer.

It is found in the nucleus. Its function is as follows. Transcriptional activator involved in the unfolded protein response (UPR) pathway. Recognizes and binds to the UPR element (UPRE) in the promoter of UPR-regulated genes. Increases the synthesis of endoplasmic reticulum-resident proteins required for protein folding as well as components of the secretory pathway. The polypeptide is Transcriptional activator hacA (hacA) (Aspergillus oryzae (strain ATCC 42149 / RIB 40) (Yellow koji mold)).